The following is a 1107-amino-acid chain: Dynein axonemal assembly factor 1 homolog (1107 aa).

6 LRR repeats span residues 34 to 56, 57 to 78, 79 to 100, 101 to 122, 125 to 146, and 150 to 171; these read HLNDILYLNYSGYNAIESLEEYV, GLKCLWLECNAISEIKGLEYQT, ELKCLYLQNNLITKIENLDSCK, QLDTLNLSHNHITRIENCGHDI, VLNTLNLSHNYLKTADNLDHLR, and FVSVLDLSHNRIEDIAIVKILG. The LRRCT domain maps to 184 to 223; sequence NPVVNEIPSYRKTLILECKNLTYLDTRPVFDRDRACAEAW. Disordered regions lie at residues 258–281, 428–487, 500–608, 780–810, 834–855, and 1070–1107; these read HRGDGEPELLKTSSDEEDEDKASK, NESP…TLNV, ESKD…LEKE, KEEPKAPETPSIESEEEIPEELEVHSSEHEQ, SSEDLKSNFDDSSESSDSAEED, and AAHAGEVMQDTEDVESKPVEIDGTKEETVDSELADNCD. Residues 428-437 show a composition bias toward polar residues; it reads NESPLTSPSF. A compositionally biased stretch (acidic residues) spans 446–459; it reads EEIEPTDVEEEQQI. The span at 500 to 512 shows a compositional bias: basic and acidic residues; sequence ESKDGELISKVES. Positions 531–544 are enriched in acidic residues; it reads DNSESEPTDITNED. The segment covering 549–560 has biased composition (low complexity); it reads SSSVSVTSSTDS. The span at 581 to 597 shows a compositional bias: polar residues; that stretch reads NYRQDSTTSTDSENEVS. The span at 801–810 shows a compositional bias: basic and acidic residues; that stretch reads LEVHSSEHEQ. Over residues 844-855 the composition is skewed to acidic residues; the sequence is DSSESSDSAEED. Basic and acidic residues predominate over residues 1083–1097; sequence VESKPVEIDGTKEET. Positions 1098 to 1107 are enriched in acidic residues; it reads VDSELADNCD.

The protein belongs to the DNAAF1 family.

Its subcellular location is the cell projection. The protein resides in the cilium. Cilium-specific protein required for cilia structures. This chain is Dynein axonemal assembly factor 1 homolog, found in Aedes aegypti (Yellowfever mosquito).